The following is a 239-amino-acid chain: 1-(5-phosphoribosyl)-5-[(5-phosphoribosylamino)methylideneamino] imidazole-4-carboxamide isomerase (239 aa).

Aspartate 8 (proton acceptor) is an active-site residue. Aspartate 129 serves as the catalytic Proton donor.

Belongs to the HisA/HisF family.

It is found in the cytoplasm. It carries out the reaction 1-(5-phospho-beta-D-ribosyl)-5-[(5-phospho-beta-D-ribosylamino)methylideneamino]imidazole-4-carboxamide = 5-[(5-phospho-1-deoxy-D-ribulos-1-ylimino)methylamino]-1-(5-phospho-beta-D-ribosyl)imidazole-4-carboxamide. It participates in amino-acid biosynthesis; L-histidine biosynthesis; L-histidine from 5-phospho-alpha-D-ribose 1-diphosphate: step 4/9. The protein is 1-(5-phosphoribosyl)-5-[(5-phosphoribosylamino)methylideneamino] imidazole-4-carboxamide isomerase of Pelagibacter ubique (strain HTCC1062).